We begin with the raw amino-acid sequence, 763 residues long: Translation initiation factor IF-2, chloroplastic (763 aa).

Disordered stretches follow at residues 1–22 (MFLNNQNFEKKTSSYSTNNNSS), 52–122 (IDKS…SNSA), and 149–168 (NNKIPQQKKQQVASSIDQSI). Residues 13–22 (SSYSTNNNSS) show a composition bias toward low complexity. Over residues 73 to 92 (RIDKKNKNFNKAHDLLDNKK) the composition is skewed to basic and acidic residues. The span at 93 to 104 (NKNRQRKKIKNK) shows a compositional bias: basic residues. The segment covering 151–168 (KIPQQKKQQVASSIDQSI) has biased composition (polar residues). The 169-residue stretch at 261 to 429 (NRPPVVTILG…ILLLAELENL (169 aa)) folds into the tr-type G domain. GTP contacts are provided by residues 270-277 (GHVDHGKT), 316-320 (DTPGH), and 370-373 (SKID).

Belongs to the TRAFAC class translation factor GTPase superfamily. Classic translation factor GTPase family. IF-2 subfamily.

It is found in the plastid. The protein resides in the chloroplast. Its function is as follows. One of the essential components for the initiation of protein synthesis. Protects formylmethionyl-tRNA from spontaneous hydrolysis and promotes its binding to the 30S ribosomal subunits. Also involved in the hydrolysis of GTP during the formation of the 70S ribosomal complex. This Porphyra purpurea (Red seaweed) protein is Translation initiation factor IF-2, chloroplastic (infB).